Here is an 894-residue protein sequence, read N- to C-terminus: Histone-lysine N-methyltransferase EZ2 (894 aa).

The span at 1 to 11 (MASSSKASDSS) shows a compositional bias: low complexity. Disordered stretches follow at residues 1–25 (MASS…GKDA), 395–447 (SSVS…KRQK), and 491–513 (KKTS…VGRQ). The span at 395–421 (SSVSAEESTTTPSADISETENVSSDLP) shows a compositional bias: polar residues. Over residues 425–435 (LRKHKISKHGP) the composition is skewed to basic residues. Positions 503–513 (PATTMENVGRQ) are enriched in polar residues. The 51-residue stretch at 527–577 (TLSCWSALERDLYLKGIEIFGKNSCLIARNLLSGLKTCIEVANYMYNNGAA) folds into the SANT domain. A CXC domain is found at 627–731 (AGHPTVRKRT…SLGEPLARGD (105 aa)). One can recognise an SET domain in the interval 746 to 861 (QRILLGRSDV…ASEELFYDYR (116 aa)). Residues 867–894 (APAWARRPEGSKKDEASVSHRRAHKVAR) are disordered. The segment covering 872–884 (RRPEGSKKDEASV) has biased composition (basic and acidic residues). Residues 885 to 894 (SHRRAHKVAR) are compositionally biased toward basic residues.

It belongs to the class V-like SAM-binding methyltransferase superfamily. Histone-lysine methyltransferase family. EZ subfamily.

Its subcellular location is the nucleus. The enzyme catalyses L-lysyl(27)-[histone H3] + 3 S-adenosyl-L-methionine = N(6),N(6),N(6)-trimethyl-L-lysyl(27)-[histone H3] + 3 S-adenosyl-L-homocysteine + 3 H(+). In terms of biological role, polycomb group (PcG) protein. Catalytic subunit of some PcG multiprotein complex, which methylates 'Lys-27' of histone H3, leading to transcriptional repression of the affected target genes. PcG proteins are not required to initiate repression, but to maintain it during later stages of development. The sequence is that of Histone-lysine N-methyltransferase EZ2 (EZ2) from Zea mays (Maize).